The following is a 432-amino-acid chain: Trigger factor (432 aa).

The PPIase FKBP-type domain maps to 161-246 (EDRVTIDFTG…LKKVEERGLP (86 aa)).

It belongs to the FKBP-type PPIase family. Tig subfamily.

It localises to the cytoplasm. The enzyme catalyses [protein]-peptidylproline (omega=180) = [protein]-peptidylproline (omega=0). Involved in protein export. Acts as a chaperone by maintaining the newly synthesized protein in an open conformation. Functions as a peptidyl-prolyl cis-trans isomerase. The chain is Trigger factor from Salmonella choleraesuis (strain SC-B67).